The sequence spans 394 residues: Homoserine O-succinyltransferase (394 aa).

The 315-residue stretch at 54 to 368 folds into the AB hydrolase-1 domain; it reads NAVLICHALS…SSPAGHDAFL (315 aa). Ser-160 serves as the catalytic Nucleophile. Arg-236 is a binding site for substrate. Catalysis depends on residues Asp-331 and His-364. Asp-365 lines the substrate pocket.

Belongs to the AB hydrolase superfamily. MetX family. In terms of assembly, homodimer.

Its subcellular location is the cytoplasm. The enzyme catalyses L-homoserine + succinyl-CoA = O-succinyl-L-homoserine + CoA. It functions in the pathway amino-acid biosynthesis; L-methionine biosynthesis via de novo pathway; O-succinyl-L-homoserine from L-homoserine: step 1/1. Transfers a succinyl group from succinyl-CoA to L-homoserine, forming succinyl-L-homoserine. The sequence is that of Homoserine O-succinyltransferase from Magnetococcus marinus (strain ATCC BAA-1437 / JCM 17883 / MC-1).